The chain runs to 106 residues: Immunity protein CdiI (106 aa).

Forms a contact-dependent growth inhibition complex of CdiA-CT-NC101, CdiI-NC101 and EF-Tu; the complex is a dimer of heterotrimers.

Immunity protein component of a toxin-immunity protein module, which functions as a cellular contact-dependent growth inhibition (CDI) system. CDI modules allow bacteria to communicate with and inhibit the growth of closely related neighboring bacteria in a contact-dependent fashion. Neutralizes the toxic activity of cognate toxin CdiA-NC101 (the C-terminal 154 residue CT fragment). Does not inhibit toxic activity of CdiA from other toxin-immunity modules or strains of E.coli. Mediates dimerization of the ternary CdiA-CT-NC101, CdiI-NC101 and EF-Tu complex; both CdiI molecules contact both EF-Tu molecules. The polypeptide is Immunity protein CdiI (Escherichia coli (strain NC101)).